The chain runs to 228 residues: Ribose-5-phosphate isomerase A (228 aa).

Substrate is bound by residues 29–32, 85–88, and 98–101; these read TGST, DGAD, and KGGG. The active-site Proton acceptor is the glutamate 107. Lysine 125 is a binding site for substrate.

This sequence belongs to the ribose 5-phosphate isomerase family. Homodimer.

The catalysed reaction is aldehydo-D-ribose 5-phosphate = D-ribulose 5-phosphate. It participates in carbohydrate degradation; pentose phosphate pathway; D-ribose 5-phosphate from D-ribulose 5-phosphate (non-oxidative stage): step 1/1. Catalyzes the reversible conversion of ribose-5-phosphate to ribulose 5-phosphate. In Staphylococcus aureus (strain Mu50 / ATCC 700699), this protein is Ribose-5-phosphate isomerase A.